Here is a 518-residue protein sequence, read N- to C-terminus: UNC5C-like protein (518 aa).

The Extracellular portion of the chain corresponds to 1 to 10 (MSPQESSVQP). The helical; Signal-anchor for type III membrane protein transmembrane segment at 11-31 (SQFLLLVGIPVASALLLAQCL) threads the bilayer. At 32–518 (RWHCCQWLPG…NHGLELDEKL (487 aa)) the chain is on the cytoplasmic side. Residues 102–237 (VFSAREVDHR…FSLYTCVLEA (136 aa)) enclose the ZU5 domain. Residues 186–400 (QQPSQACAYS…ETWAVPPPVS (215 aa)) are interaction with RELA and NFKB1. Residues 208–235 (PLGQPGTHISRDECRILLSHFSLYTCVL) are peptidase S68. Catalysis depends on residues histidine 227 and serine 229. The 80-residue stretch at 415–494 (QLQMLLEPNS…SAIQNYLNRS (80 aa)) folds into the Death domain.

Belongs to the unc-5 family. In terms of assembly, interacts with p65/RELA and NFKB1.

The protein localises to the membrane. The protein resides in the cytoplasm. In terms of biological role, inhibits NF-kappa-B-dependent transcription by impairing NF-kappa-B binding to its targets. The polypeptide is UNC5C-like protein (Unc5cl) (Mus musculus (Mouse)).